A 647-amino-acid chain; its full sequence is DNA mismatch repair protein MutL (647 aa).

It belongs to the DNA mismatch repair MutL/HexB family.

Its function is as follows. This protein is involved in the repair of mismatches in DNA. It is required for dam-dependent methyl-directed DNA mismatch repair. May act as a 'molecular matchmaker', a protein that promotes the formation of a stable complex between two or more DNA-binding proteins in an ATP-dependent manner without itself being part of a final effector complex. In Bacillus thuringiensis subsp. konkukian (strain 97-27), this protein is DNA mismatch repair protein MutL.